The chain runs to 181 residues: Protein Syd (181 aa).

This sequence belongs to the Syd family.

It localises to the cell inner membrane. In terms of biological role, interacts with the SecY protein in vivo. May bind preferentially to an uncomplexed state of SecY, thus functioning either as a chelating agent for excess SecY in the cell or as a regulatory factor that negatively controls the translocase function. In Alteromonas mediterranea (strain DSM 17117 / CIP 110805 / LMG 28347 / Deep ecotype), this protein is Protein Syd.